The chain runs to 265 residues: tRNA pseudouridine synthase A (265 aa).

D52 functions as the Nucleophile in the catalytic mechanism. Y105 lines the substrate pocket.

It belongs to the tRNA pseudouridine synthase TruA family.

It catalyses the reaction uridine(38/39/40) in tRNA = pseudouridine(38/39/40) in tRNA. Formation of pseudouridine at positions 38, 39 and 40 in the anticodon stem and loop of transfer RNAs. This chain is tRNA pseudouridine synthase A, found in Archaeoglobus fulgidus (strain ATCC 49558 / DSM 4304 / JCM 9628 / NBRC 100126 / VC-16).